The sequence spans 449 residues: Cysteine--tRNA ligase (449 aa).

Cysteine 29 is a Zn(2+) binding site. A 'HIGH' region motif is present at residues 31–41 (PTVYDHLHIGN). Residues cysteine 211, histidine 236, and glutamate 240 each coordinate Zn(2+). The 'KMSKS' region signature appears at 269-273 (KMSKS). Lysine 272 contributes to the ATP binding site.

This sequence belongs to the class-I aminoacyl-tRNA synthetase family. Monomer. It depends on Zn(2+) as a cofactor.

Its subcellular location is the cytoplasm. It carries out the reaction tRNA(Cys) + L-cysteine + ATP = L-cysteinyl-tRNA(Cys) + AMP + diphosphate. The sequence is that of Cysteine--tRNA ligase from Methylocella silvestris (strain DSM 15510 / CIP 108128 / LMG 27833 / NCIMB 13906 / BL2).